The primary structure comprises 776 residues: GATOR2 complex protein Wdr24 (776 aa).

6 WD repeats span residues Asn63–Gln103, Glu109–Thr149, Cys152–Val192, Ala196–His235, His238–Ala280, and Glu284–Ala326. A disordered region spans residues His466–Pro490. Over residues Ser469 to Pro490 the composition is skewed to polar residues. The segment at Asn703 to Gln726 adopts a C4-type zinc-finger fold. Zn(2+)-binding residues include Cys704, Cys707, Cys719, Cys722, Cys730, Cys733, Cys744, Cys747, His749, His752, His755, Cys766, Cys769, His771, and Cys773. An RING-type; atypical zinc finger spans residues Ala728 to Ser776.

The protein belongs to the WD repeat WDR24 family. Component of the GATOR complex consisting of mio, Nup44A/Seh1, Im11, Nplr3, Nplr2, Wdr24, Wdr59 and Sec13. Within the GATOR complex, probable component of the GATOR2 subcomplex which is likely composed of mio, Nup44A/Seh1, Wdr24, Wdr59 and Sec13. Interacts with Nup44A/Seh1. Interacts with mio. Interacts with Nplr3. The GATOR2 complex associates with unmet in the absence of S-adenosyl-L-methionine; the mio-Wdr24-Nup44A subcomplex is essential and sufficient for this interaction while Wdr59 and Sec13 are dispensable. This association acts as a nutrient sensor to inhibit mTORC1 signaling in the absence of methionine.

The protein localises to the lysosome. Its subcellular location is the cytoplasmic vesicle. It is found in the autophagosome. It catalyses the reaction S-ubiquitinyl-[E2 ubiquitin-conjugating enzyme]-L-cysteine + [acceptor protein]-L-lysine = [E2 ubiquitin-conjugating enzyme]-L-cysteine + N(6)-ubiquitinyl-[acceptor protein]-L-lysine.. The protein operates within protein modification; protein ubiquitination. An essential component of the GATOR subcomplex GATOR2 which functions as an activator of the amino acid-sensing branch of the mTORC1 signaling pathway. The two GATOR subcomplexes, GATOR1 and GATOR2, regulate the mTORC1 pathway in order to mediate metabolic homeostasis, female gametogenesis and the response to amino acid limitation and complete starvation. GATOR2 activates the mTORC1 signaling pathway through the inhibition of the GATOR1 subcomplex, controlling the switch to cell proliferation and growth under nutrient replete conditions and during female oocyte development. GATOR2 probably acts as an E3 ubiquitin-protein ligase toward GATOR1. In the presence of abundant amino acids, the GATOR2 complex mediates ubiquitination of components of the GATOR1 complex, leading to GATOR1 inactivation. This GATOR2 component is required for activating mTORC1 and promoting cell growth in both germline and somatic cells. In addition to its role in regulation of the mTORC1 complex, functions independently of mTORC1 to promote the acidification of lysosomes and facilitates autophagic flux. The sequence is that of GATOR2 complex protein Wdr24 from Drosophila melanogaster (Fruit fly).